The chain runs to 109 residues: MLQTAEAPWSQAETQSAHALFRKAYQRELDGLLATVQAQASQITQIDDLWKLHDFLSAKRHEIDGKYDDRQSVIIFVFAQLLKEGLVQAEELTFLAADKQSKIKALARL.

In terms of assembly, probably a dimer, interacts with the C-terminal domain of OCP-R.

It localises to the cellular thylakoid membrane. Destabilizes orange carotenoid protein-R form (OCP-R), the FRP-OCP interaction accelerates the OCP-R to OCP-O conversion. Increases fluorescence recovery following non-photochemical quenching (NPQ) by OCP, most probably by destabilizing OCP-R binding to the phycobilisome core. The polypeptide is Fluorescence recovery protein (frp) (Synechocystis sp. (strain ATCC 27184 / PCC 6803 / Kazusa)).